We begin with the raw amino-acid sequence, 313 residues long: Ribosomal RNA small subunit methyltransferase H (313 aa).

Residues 35 to 37 (GGH), Asp-55, Phe-80, Asp-102, and Gln-109 contribute to the S-adenosyl-L-methionine site.

Belongs to the methyltransferase superfamily. RsmH family.

The protein localises to the cytoplasm. It carries out the reaction cytidine(1402) in 16S rRNA + S-adenosyl-L-methionine = N(4)-methylcytidine(1402) in 16S rRNA + S-adenosyl-L-homocysteine + H(+). Its function is as follows. Specifically methylates the N4 position of cytidine in position 1402 (C1402) of 16S rRNA. The sequence is that of Ribosomal RNA small subunit methyltransferase H from Shewanella woodyi (strain ATCC 51908 / MS32).